We begin with the raw amino-acid sequence, 151 residues long: UPAR/Ly6 domain-containing protein rtv (151 aa).

Residues 1–19 (MQFTSLLLAVIFLISLVSI) form the signal peptide. Topologically, residues 20-125 (DGLLRRCYQC…QGDLCNGARS (106 aa)) are extracellular. Cystine bridges form between C26/C65, C29/C38, C60/C88, C100/C113, and C115/C120. The N-linked (GlcNAc...) asparagine glycan is linked to N45. N121 carries GPI-anchor amidated asparagine lipidation. Residues 122–151 (GARSWSSAPQMILITMLPLLGSWLLQRMRN) constitute a propeptide, removed in mature form. The helical transmembrane segment at 126-146 (WSSAPQMILITMLPLLGSWLL) threads the bilayer. Topologically, residues 147–151 (QRMRN) are cytoplasmic.

It belongs to the quiver family.

It localises to the cell membrane. Required for chitin fiber assembly and organization involved in cuticle formation and tracheal development. The protein is UPAR/Ly6 domain-containing protein rtv of Drosophila melanogaster (Fruit fly).